A 137-amino-acid chain; its full sequence is ATP synthase epsilon chain, chloroplastic (137 aa).

It belongs to the ATPase epsilon chain family. F-type ATPases have 2 components, CF(1) - the catalytic core - and CF(0) - the membrane proton channel. CF(1) has five subunits: alpha(3), beta(3), gamma(1), delta(1), epsilon(1). CF(0) has three main subunits: a, b and c.

Its subcellular location is the plastid. It localises to the chloroplast thylakoid membrane. In terms of biological role, produces ATP from ADP in the presence of a proton gradient across the membrane. The protein is ATP synthase epsilon chain, chloroplastic of Pisum sativum (Garden pea).